A 319-amino-acid chain; its full sequence is Ferrochelatase (319 aa).

Residues His-193 and Glu-274 each coordinate Fe cation.

This sequence belongs to the ferrochelatase family.

Its subcellular location is the cytoplasm. The catalysed reaction is heme b + 2 H(+) = protoporphyrin IX + Fe(2+). The protein operates within porphyrin-containing compound metabolism; protoheme biosynthesis; protoheme from protoporphyrin-IX: step 1/1. Its function is as follows. Catalyzes the ferrous insertion into protoporphyrin IX. In Erwinia tasmaniensis (strain DSM 17950 / CFBP 7177 / CIP 109463 / NCPPB 4357 / Et1/99), this protein is Ferrochelatase.